The following is a 155-amino-acid chain: Ribosomal RNA large subunit methyltransferase H (155 aa).

S-adenosyl-L-methionine is bound by residues L72, G103, and 122-127; that span reads LSPLTL.

Belongs to the RNA methyltransferase RlmH family. In terms of assembly, homodimer.

Its subcellular location is the cytoplasm. It carries out the reaction pseudouridine(1915) in 23S rRNA + S-adenosyl-L-methionine = N(3)-methylpseudouridine(1915) in 23S rRNA + S-adenosyl-L-homocysteine + H(+). In terms of biological role, specifically methylates the pseudouridine at position 1915 (m3Psi1915) in 23S rRNA. The sequence is that of Ribosomal RNA large subunit methyltransferase H from Haemophilus influenzae (strain PittEE).